A 242-amino-acid polypeptide reads, in one-letter code: MAETEALSKLREDFRMQNKSVFILGASGETGRVLLKEILEQGLFSKVTLIGRRKLTFDEEAYKNVNQEVVDFEKLDDYASAFQGHDVGFCCLGTTRGKAGAEGFARVDRDYVLKSAELAKAGGCKHFNLLSSKGADKSSNFLYLQVKGEVEAKVEELKFDRYSVFRPGVXLCDRQESRPGEWLVRKFFGSLPDSWASGHSVPVVTVVRAMLNNVVRPRDKQMELLENKAIHDLGKAHGSLKP.

Ala-2 is modified (N-acetylalanine). Residues 2 to 25 are required for interaction with elongation factor EEF1A1; it reads AETEALSKLREDFRMQNKSVFILG. Ser-27, Gly-28, Glu-29, Thr-30, Arg-52, Arg-53, Leu-92, Gly-93, Tyr-143, Lys-147, and Arg-178 together coordinate NADPH. Tyr-143 serves as the catalytic Proton acceptor. The active site involves Lys-147.

As to quaternary structure, monomer. Forms homodimers during oxidative stress. Interacts (via N-terminus) with elongation factor EEF1A1 (via middle-region); the interaction is direct and competes with EEF1A1 binding to guanyl-nucleotide exchange factor EEF1B2, thereby inhibiting GDP for GTP exchange and reactivation of EEF1A1. Interacts with nuclear transport receptors XPO4, IPO5/RANBP5, IPO7, IPO9 and KPNB1 as well as GCN1L1/GCN1 and LRPPRC probably through their HEAT repeats. Binds NCOA5/CIA.

Its subcellular location is the cytoplasm. Its function is as follows. Represses translation by preventing reactivation of elongation factor eEF1A. May also inhibit nuclear import by competing with nuclear import substrates for binding to a subset of nuclear transport receptors. Has additionally been proposed to act as a redox sensor involved in cellular oxidative stress surveillance. This is Protein HTATIP2 (HTATIP2) from Pan paniscus (Pygmy chimpanzee).